A 420-amino-acid chain; its full sequence is Ribosome biogenesis protein WDR12 homolog (420 aa).

The ubiquitin-like (UBL) domain stretch occupies residues 10–92 (VQVHLKTKQE…EDAIEIEYVE (83 aa)). WD repeat units follow at residues 104–142 (LHDDWVSAVKASGKWILSGCYDNTLNLWTNKGKHILTIS), 143–185 (GHTA…NSVE), 192–231 (GHERGVDSVSVSPDGLRFATGSWDTMLKVWSAEVEDAVEG), 250–288 (GHRESVSAVQWMDASTLLTGSWDHTLKVWDLSLEGIKTE), 290–329 (STNKSIFDASYSKLNRLILTASADKNLRLYDPRTNQGSVV), 335–375 (GHNA…APLY), and 379–417 (GHGEKVLDIDWSNPKYIVSGGVDNTVRVFKSRKALADDA).

Belongs to the WD repeat WDR12/YTM1 family.

It localises to the nucleus. The protein localises to the nucleolus. It is found in the nucleoplasm. Its function is as follows. Required for maturation of ribosomal RNAs and formation of the large ribosomal subunit. This chain is Ribosome biogenesis protein WDR12 homolog, found in Drosophila yakuba (Fruit fly).